A 500-amino-acid chain; its full sequence is Cytochrome P450 monooxygenase astJ (500 aa).

Heme is bound at residue Cys440.

This sequence belongs to the cytochrome P450 family. It depends on heme as a cofactor.

It functions in the pathway secondary metabolite biosynthesis; terpenoid biosynthesis. Functionally, cytochrome P450 monooxygenase; part of the gene cluster that mediates the biosynthesis of astellolides, drimane-type sesquiterpene esters that show antimicrobial, anti-inflammatory, and anti-tumor activities. The first step in astellolide biosynthesis is performed by the sesquiterpene cyclase astC that catalyzes the formation of drimanyl pyrophosphate from farnesyl pyrophosphate. Drimanyl pyrophosphate is then dephosphorylated by the sesquiterpene phosphatase astI to produce drimanyl monophosphate which is further dephosphorylated to drim-8-ene-11-ol by atsK. Drim-8-ene-11-ol is converted to confertifolin, probably by the cytochrome P450 monooxygenase astD and/or the dehydrogenase astE. The cytochrome P450 monooxygenases astB, astF and astJ then hydroxylate confertifolin at C6, C14, or C15 to form trihydroxy confertifolin. The nonribosomal peptide synthetase astA catalyzes ester bond formation between trihydroxy contifolin and benzoic acid (BA) or 4-hydroxy benzoic acid (4HBA), leading to the formation of dideacetyl astellolides A and B, respectively. Finally, the O-acetyltransferase astG converts dideacetyl astellolides A and B into deacetyl astellolides A and B. This is Cytochrome P450 monooxygenase astJ from Aspergillus oryzae (strain ATCC 42149 / RIB 40) (Yellow koji mold).